We begin with the raw amino-acid sequence, 433 residues long: uncharacterized protein (433 aa).

One can recognise a TRAM domain in the interval 1–59 (MGEEYEVEIGPVAHGGHCIARTSEGQVLFVRHALPGERVLARVTEGEEGARYLRADAVE). 4 residues coordinate [4Fe-4S] cluster: Cys72, Cys80, Cys83, and Cys168. The S-adenosyl-L-methionine site is built by Gln262, Tyr291, Glu315, and Asp359. The Nucleophile role is filled by Cys386.

This sequence belongs to the class I-like SAM-binding methyltransferase superfamily. RNA M5U methyltransferase family.

This is an uncharacterized protein from Streptomyces avermitilis (strain ATCC 31267 / DSM 46492 / JCM 5070 / NBRC 14893 / NCIMB 12804 / NRRL 8165 / MA-4680).